Consider the following 123-residue polypeptide: Small ribosomal subunit protein uS12c (123 aa).

This sequence belongs to the universal ribosomal protein uS12 family. As to quaternary structure, part of the 30S ribosomal subunit.

The protein resides in the plastid. It is found in the chloroplast. Functionally, with S4 and S5 plays an important role in translational accuracy. Located at the interface of the 30S and 50S subunits. In Anthoceros angustus (Hornwort), this protein is Small ribosomal subunit protein uS12c (rps12).